We begin with the raw amino-acid sequence, 280 residues long: Fasciclin-like arabinogalactan protein 3 (280 aa).

Residues 1-24 (MGLKVSSSLLCLTILLAVSSIVSA) form the signal peptide. The FAS1 domain occupies 25–169 (VNITRVLEKY…LSVVQISMPI (145 aa)). N-linked (GlcNAc...) asparagine glycans are attached at residues N26, N126, and N159. The span at 180–193 (VPPPPPMSSPPAPS) shows a compositional bias: pro residues. The tract at residues 180 to 262 (VPPPPPMSSP…EPPSSASNTG (83 aa)) is disordered. The span at 219–234 (APETAPASAPSESDSP) shows a compositional bias: low complexity. Residue S256 is the site of GPI-anchor amidated serine attachment. Positions 257 to 280 (SASNTGLSFGAVLVLGFVASFVGF) are cleaved as a propeptide — removed in mature form.

This sequence belongs to the fasciclin-like AGP family.

The protein localises to the cell membrane. In terms of biological role, may be a cell surface adhesion protein. This Arabidopsis thaliana (Mouse-ear cress) protein is Fasciclin-like arabinogalactan protein 3 (FLA3).